We begin with the raw amino-acid sequence, 388 residues long: Succinate--CoA ligase [ADP-forming] subunit beta (388 aa).

The ATP-grasp domain maps to lysine 9–leucine 244. Residues lysine 46, glycine 53–glycine 55, glutamate 99, serine 102, and glutamate 107 contribute to the ATP site. 2 residues coordinate Mg(2+): asparagine 199 and aspartate 213. Substrate is bound by residues asparagine 264 and glycine 321 to valine 323.

The protein belongs to the succinate/malate CoA ligase beta subunit family. Heterotetramer of two alpha and two beta subunits. Mg(2+) serves as cofactor.

The enzyme catalyses succinate + ATP + CoA = succinyl-CoA + ADP + phosphate. The catalysed reaction is GTP + succinate + CoA = succinyl-CoA + GDP + phosphate. The protein operates within carbohydrate metabolism; tricarboxylic acid cycle; succinate from succinyl-CoA (ligase route): step 1/1. Its function is as follows. Succinyl-CoA synthetase functions in the citric acid cycle (TCA), coupling the hydrolysis of succinyl-CoA to the synthesis of either ATP or GTP and thus represents the only step of substrate-level phosphorylation in the TCA. The beta subunit provides nucleotide specificity of the enzyme and binds the substrate succinate, while the binding sites for coenzyme A and phosphate are found in the alpha subunit. The polypeptide is Succinate--CoA ligase [ADP-forming] subunit beta (Pasteurella multocida (strain Pm70)).